A 179-amino-acid polypeptide reads, in one-letter code: Large ribosomal subunit protein bL17 (179 aa).

The disordered stretch occupies residues 127–179 (TDTLPDTVIDTGPDSAPDPVPGSEPGSAAGDLPDADTAPADPGESSSNQRVIR). Residues 154-168 (AAGDLPDADTAPADP) show a composition bias toward low complexity. The segment covering 170–179 (ESSSNQRVIR) has biased composition (polar residues).

The protein belongs to the bacterial ribosomal protein bL17 family. As to quaternary structure, part of the 50S ribosomal subunit. Contacts protein L32.

In Tropheryma whipplei (strain TW08/27) (Whipple's bacillus), this protein is Large ribosomal subunit protein bL17.